The sequence spans 189 residues: Dual-action ribosomal maturation protein DarP (189 aa).

The interval 1–22 (MWKNGAMRGCNKETGEFLGPSR) is disordered.

It belongs to the DarP family.

The protein localises to the cytoplasm. In terms of biological role, member of a network of 50S ribosomal subunit biogenesis factors which assembles along the 30S-50S interface, preventing incorrect 23S rRNA structures from forming. Promotes peptidyl transferase center (PTC) maturation. In Xylella fastidiosa (strain Temecula1 / ATCC 700964), this protein is Dual-action ribosomal maturation protein DarP.